The chain runs to 467 residues: Chromosomal replication initiator protein DnaA (467 aa).

The domain I, interacts with DnaA modulators stretch occupies residues M1 to A90. Residues V91 to S130 form a domain II region. The segment covering P98–P111 has biased composition (low complexity). Positions P98 to N119 are disordered. The domain III, AAA+ region stretch occupies residues N131–A347. ATP contacts are provided by G175, G177, K178, and T179. The segment at N348 to S467 is domain IV, binds dsDNA.

Belongs to the DnaA family. As to quaternary structure, oligomerizes as a right-handed, spiral filament on DNA at oriC.

It localises to the cytoplasm. Its function is as follows. Plays an essential role in the initiation and regulation of chromosomal replication. ATP-DnaA binds to the origin of replication (oriC) to initiate formation of the DNA replication initiation complex once per cell cycle. Binds the DnaA box (a 9 base pair repeat at the origin) and separates the double-stranded (ds)DNA. Forms a right-handed helical filament on oriC DNA; dsDNA binds to the exterior of the filament while single-stranded (ss)DNA is stabiized in the filament's interior. The ATP-DnaA-oriC complex binds and stabilizes one strand of the AT-rich DNA unwinding element (DUE), permitting loading of DNA polymerase. After initiation quickly degrades to an ADP-DnaA complex that is not apt for DNA replication. Binds acidic phospholipids. The polypeptide is Chromosomal replication initiator protein DnaA (Shigella boydii serotype 4 (strain Sb227)).